We begin with the raw amino-acid sequence, 332 residues long: Ferredoxin--NADP reductase (332 aa).

FAD is bound by residues E36, Q44, Y49, V91, F124, and T327.

Belongs to the ferredoxin--NADP reductase type 2 family. Homodimer. FAD serves as cofactor.

It carries out the reaction 2 reduced [2Fe-2S]-[ferredoxin] + NADP(+) + H(+) = 2 oxidized [2Fe-2S]-[ferredoxin] + NADPH. This is Ferredoxin--NADP reductase from Streptococcus thermophilus (strain CNRZ 1066).